Here is a 213-residue protein sequence, read N- to C-terminus: Orotate phosphoribosyltransferase (213 aa).

Position 26 (Lys-26) interacts with 5-phospho-alpha-D-ribose 1-diphosphate. Position 34-35 (34-35 (FF)) interacts with orotate. 5-phospho-alpha-D-ribose 1-diphosphate is bound by residues 72–73 (YK), Arg-99, Lys-100, Lys-103, His-105, and 124–132 (DDVITAGTA). Residues Thr-128 and Arg-156 each coordinate orotate.

It belongs to the purine/pyrimidine phosphoribosyltransferase family. PyrE subfamily. Homodimer. Mg(2+) is required as a cofactor.

It carries out the reaction orotidine 5'-phosphate + diphosphate = orotate + 5-phospho-alpha-D-ribose 1-diphosphate. The protein operates within pyrimidine metabolism; UMP biosynthesis via de novo pathway; UMP from orotate: step 1/2. Catalyzes the transfer of a ribosyl phosphate group from 5-phosphoribose 1-diphosphate to orotate, leading to the formation of orotidine monophosphate (OMP). This Shigella sonnei (strain Ss046) protein is Orotate phosphoribosyltransferase.